The sequence spans 1211 residues: DNA-directed RNA polymerase subunit beta' (1211 aa).

Cys-60, Cys-62, Cys-75, and Cys-78 together coordinate Zn(2+). The Mg(2+) site is built by Asp-450, Asp-452, and Asp-454. Zn(2+) is bound by residues Cys-819, Cys-893, Cys-900, and Cys-903.

The protein belongs to the RNA polymerase beta' chain family. As to quaternary structure, the RNAP catalytic core consists of 2 alpha, 1 beta, 1 beta' and 1 omega subunit. When a sigma factor is associated with the core the holoenzyme is formed, which can initiate transcription. It depends on Mg(2+) as a cofactor. Zn(2+) is required as a cofactor.

It catalyses the reaction RNA(n) + a ribonucleoside 5'-triphosphate = RNA(n+1) + diphosphate. Functionally, DNA-dependent RNA polymerase catalyzes the transcription of DNA into RNA using the four ribonucleoside triphosphates as substrates. The sequence is that of DNA-directed RNA polymerase subunit beta' from Streptococcus equi subsp. zooepidemicus (strain H70).